The following is a 302-amino-acid chain: tRNA-cytidine(32) 2-sulfurtransferase (302 aa).

The short motif at 43-48 (SGGKDS) is the PP-loop motif element. [4Fe-4S] cluster contacts are provided by cysteine 118, cysteine 121, and cysteine 209.

This sequence belongs to the TtcA family. Homodimer. The cofactor is Mg(2+). Requires [4Fe-4S] cluster as cofactor.

The protein localises to the cytoplasm. The catalysed reaction is cytidine(32) in tRNA + S-sulfanyl-L-cysteinyl-[cysteine desulfurase] + AH2 + ATP = 2-thiocytidine(32) in tRNA + L-cysteinyl-[cysteine desulfurase] + A + AMP + diphosphate + H(+). It participates in tRNA modification. In terms of biological role, catalyzes the ATP-dependent 2-thiolation of cytidine in position 32 of tRNA, to form 2-thiocytidine (s(2)C32). The sulfur atoms are provided by the cysteine/cysteine desulfurase (IscS) system. This is tRNA-cytidine(32) 2-sulfurtransferase from Polynucleobacter necessarius subsp. necessarius (strain STIR1).